A 331-amino-acid chain; its full sequence is Protein MGF 300-4L (331 aa).

This sequence belongs to the asfivirus MGF 300 family.

This African swine fever virus (isolate Tick/Malawi/Lil 20-1/1983) (ASFV) protein is Protein MGF 300-4L.